A 36-amino-acid chain; its full sequence is Photosystem I reaction center subunit VIII (36 aa).

Residues 8–28 traverse the membrane as a helical segment; the sequence is AILVPIVGLVFPALSMALFFI.

This sequence belongs to the PsaI family.

The protein localises to the plastid. It localises to the chloroplast thylakoid membrane. Its function is as follows. May help in the organization of the PsaL subunit. This chain is Photosystem I reaction center subunit VIII, found in Phaeodactylum tricornutum (strain CCAP 1055/1).